The primary structure comprises 391 residues: Glycerol-3-phosphate dehydrogenase [NAD(+)] 1 (391 aa).

NAD(+) contacts are provided by residues 41-46 (GSGNWG), Phe-129, Lys-152, and Ala-185. Lys-152 is a substrate binding site. Catalysis depends on Lys-245, which acts as the Proton acceptor. Residues Arg-310 and Gln-339 each contribute to the NAD(+) site. Substrate is bound at residue 310-311 (RN).

This sequence belongs to the NAD-dependent glycerol-3-phosphate dehydrogenase family.

It is found in the cytoplasm. It carries out the reaction sn-glycerol 3-phosphate + NAD(+) = dihydroxyacetone phosphate + NADH + H(+). The polypeptide is Glycerol-3-phosphate dehydrogenase [NAD(+)] 1 (GPD1) (Saccharomyces uvarum (Yeast)).